Consider the following 156-residue polypeptide: Large ribosomal subunit protein uL15 (156 aa).

The tract at residues 25-48 (RGIGCGKGKTSGRGHKGQKARSGV) is disordered. Positions 34 to 43 (TSGRGHKGQK) are enriched in basic residues.

Belongs to the universal ribosomal protein uL15 family. In terms of assembly, part of the 50S ribosomal subunit.

In terms of biological role, binds to the 23S rRNA. This is Large ribosomal subunit protein uL15 from Wolbachia pipientis wMel.